Here is a 257-residue protein sequence, read N- to C-terminus: Fimbrial assembly protein, serogroup I (257 aa).

The chain is Fimbrial assembly protein, serogroup I (fimB) from Dichelobacter nodosus (Bacteroides nodosus).